The sequence spans 101 residues: MNDAVTKPKTRTKTKVERPKLHKVILINDDYTPREFVTMILKAEFRMTEDQAYKVMITAHKLGACVVAVFTRDVAETKATRATDAGRAKGYPLLFTTEPEE.

This sequence belongs to the ClpS family. As to quaternary structure, binds to the N-terminal domain of the chaperone ClpA.

In terms of biological role, involved in the modulation of the specificity of the ClpAP-mediated ATP-dependent protein degradation. This chain is ATP-dependent Clp protease adapter protein ClpS 1, found in Bradyrhizobium diazoefficiens (strain JCM 10833 / BCRC 13528 / IAM 13628 / NBRC 14792 / USDA 110).